The sequence spans 2131 residues: Nonribosomal peptide synthetase criC (2131 aa).

An adenylation 1 region spans residues 13–407; that stretch reads FSQQCFQHPD…GRRDRVTKIR (395 aa). A Carrier 1 domain is found at 525 to 601; that stretch reads SGPLTIDQTI…ALVEKNRHET (77 aa). The residue at position 562 (Ser562) is an O-(pantetheine 4'-phosphoryl)serine. The disordered stretch occupies residues 598–627; that stretch reads RHETENRPDSSAFATRTPEESSMPTQGPVT. Positions 625-1018 are condensation 1; it reads PVTPLQKRMV…YMSLLDAFLD (394 aa). The interval 1069-1447 is adenylation 2; it reads ASLHPTHIAV…GRKDRQVKVR (379 aa). In terms of domain architecture, Carrier 2 spans 1569 to 1647; the sequence is SSEAHLEKLI…DLITLVAQQQ (79 aa). Ser1607 carries the O-(pantetheine 4'-phosphoryl)serine modification. The condensation 2 stretch occupies residues 1688–2086; it reads SQSQSTFNVP…EALLLECFRM (399 aa).

Belongs to the NRP synthetase family. Pantetheine 4'-phosphate is required as a cofactor.

The enzyme catalyses L-tryptophan + L-alanine + 2 ATP = cyclo(L-tryptophyl-L-alanyl) + 2 ADP + 2 phosphate + 2 H(+). It participates in secondary metabolite biosynthesis. Its pathway is alkaloid biosynthesis. In terms of biological role, nonribosomal peptide synthetase; part of the gene cluster that mediates the biosynthesis of echinulin family alkaloid. The pathway begins with the biosynthesis of the cyclic dipeptide cyclo-L-Trp-L-Ala (cyclo-TA) by the NRPS criC via condensation of L-alanine and L-tryptophan. The prenyltransferase criA then catalyzes the first prenylation step, a reverse prenylation reaction at C2, to yield preechinulin. Preechinulin is the substrate of the cytochrome P450 monooxygenase criE that catalyzes the formation of the double bond between C10 and C11 to produce neoechulin A. The unique prenyltransferase criF functions as a competitive enzyme with criE for preechinulin metabolization and uses preechinulin for effective regiospecific prenylations. Preechinulin is prenylated by criF at C5 or C7. C7-prenylation leads to accumulation of tardioxopiperazine B without further modification by criF. In contrast, the C5-prenylated tardioxopiperazine A can be prenylated again by criF, predominantly at C7 to form echinulin or less frequently at C4 to give variecolorin L. CriF also accepts neoechilunin A to produce varlecolorin G (prenylation at C5) or isoechinulin A (prenylation at C7). CriF further converts isoechinulin A into dehydroechinulin. Moreover, a yet unidentified enzyme can also convert neoechilunin A into neoechilunin B by introducing a double bond between positions C14 and C17 and thus provides a further substrate to criF for C5 and C7 prenylation. The polypeptide is Nonribosomal peptide synthetase criC (Aspergillus cristatus (Chinese Fuzhuan brick tea-fermentation fungus)).